The following is a 191-amino-acid chain: Potassium-transporting ATPase KdpC subunit (191 aa).

A helical membrane pass occupies residues 7–27; sequence ASLVLFLSLTLLTGVAYPLLV.

It belongs to the KdpC family. As to quaternary structure, the system is composed of three essential subunits: KdpA, KdpB and KdpC.

Its subcellular location is the cell inner membrane. Part of the high-affinity ATP-driven potassium transport (or Kdp) system, which catalyzes the hydrolysis of ATP coupled with the electrogenic transport of potassium into the cytoplasm. This subunit acts as a catalytic chaperone that increases the ATP-binding affinity of the ATP-hydrolyzing subunit KdpB by the formation of a transient KdpB/KdpC/ATP ternary complex. The protein is Potassium-transporting ATPase KdpC subunit of Methylibium petroleiphilum (strain ATCC BAA-1232 / LMG 22953 / PM1).